A 352-amino-acid chain; its full sequence is C-C chemokine receptor type 5 (352 aa).

Residues 1-30 lie on the Extracellular side of the membrane; sequence MDYQVSSPTYDIDYYTSEPCQKIKVKQIAA. A Sulfotyrosine modification is found at Tyr3. 2 O-linked (GalNAc...) serine glycosylation sites follow: Ser6 and Ser7. Tyr10, Tyr14, and Tyr15 each carry sulfotyrosine. 2 disulfide bridges follow: Cys20–Cys269 and Cys101–Cys178. A helical transmembrane segment spans residues 31 to 58; it reads RLLPPLYSLVFIFGFVGNILVVLILINC. Residues 59–68 are Cytoplasmic-facing; the sequence is KRLKSMTDIY. The chain crosses the membrane as a helical span at residues 69–89; sequence LLNLAISDLLFLLTVPFWAHY. The Extracellular segment spans residues 90–102; the sequence is AAAQWDFGNTMCQ. Residues 103-124 form a helical membrane-spanning segment; the sequence is LLTGLYFIGFFSGIFFIILLTI. The Cytoplasmic segment spans residues 125–141; sequence DRYLAIVHAVFALKART. A helical membrane pass occupies residues 142 to 166; sequence VTFGVVTSVITWVVAVFASLPRIIF. Topologically, residues 167-198 are extracellular; sequence TRSQREGLHYTCSSHFPYSQYQFWKNFQTLKI. The helical transmembrane segment at 199 to 218 threads the bilayer; sequence VILGLVLPLLVMVICYSGIL. The Cytoplasmic segment spans residues 219 to 235; that stretch reads KTLLRCRNDKKRHRAVR. Residues 236-260 traverse the membrane as a helical segment; that stretch reads LIFTIMIVYFLFWAPYNIVLLLNTF. The Extracellular portion of the chain corresponds to 261–277; that stretch reads QEFFGLNNCSSSNRLDQ. The helical transmembrane segment at 278–301 threads the bilayer; that stretch reads AMQVTETLGMTHCCINPIIYAFVG. The Cytoplasmic segment spans residues 302-352; sequence EKFRNYLLVFFQKHIAKRFCKCCSIFQQDAPERASSVYTRSTGEQETSVGL. Residues Cys321, Cys323, and Cys324 are each lipidated (S-palmitoyl cysteine). Residues Ser336, Ser337, Ser342, and Ser349 each carry the phosphoserine; by BARK1 modification.

The protein belongs to the G-protein coupled receptor 1 family. Interacts with PRAF2. Efficient ligand binding to CCL3/MIP-1alpha and CCL4/MIP-1beta requires sulfation, O-glycosylation and sialic acid modifications. Glycosylation on Ser-6 is required for efficient binding of CCL4. Interacts with GRK2. Interacts with ARRB1 and ARRB2. Interacts with CNIH4. Interacts with S100A4; this interaction stimulates T-lymphocyte chemotaxis. Post-translationally, sulfated on at least 2 of the N-terminal tyrosines. Sulfation is required for efficient binding of the chemokines, CCL3 and CCL4. Palmitoylation in the C-terminal is important for cell surface expression. In terms of processing, phosphorylation on serine residues in the C-terminal is stimulated by binding CC chemokines especially by APO-RANTES. Post-translationally, O-glycosylated, but not N-glycosylated. Ser-6 appears to be the major site even if Ser-7 may be also O-glycosylated. Also sialylated glycans present which contribute to chemokine binding. Thr-16 and Ser-17 may also be glycosylated and, if so, with small moieties such as a T-antigen.

It localises to the cell membrane. Receptor for a number of inflammatory CC-chemokines including CCL3/MIP-1-alpha, CCL4/MIP-1-beta and RANTES and subsequently transduces a signal by increasing the intracellular calcium ion level. May play a role in the control of granulocytic lineage proliferation or differentiation. Participates in T-lymphocyte migration to the infection site by acting as a chemotactic receptor. This is C-C chemokine receptor type 5 (CCR5) from Chlorocebus sabaeus (Green monkey).